We begin with the raw amino-acid sequence, 209 residues long: GTP cyclohydrolase 1 (209 aa).

Zn(2+) contacts are provided by Cys100, His103, and Cys171.

The protein belongs to the GTP cyclohydrolase I family. As to quaternary structure, toroid-shaped homodecamer, composed of two pentamers of five dimers.

It carries out the reaction GTP + H2O = 7,8-dihydroneopterin 3'-triphosphate + formate + H(+). The protein operates within cofactor biosynthesis; 7,8-dihydroneopterin triphosphate biosynthesis; 7,8-dihydroneopterin triphosphate from GTP: step 1/1. The sequence is that of GTP cyclohydrolase 1 from Ralstonia nicotianae (strain ATCC BAA-1114 / GMI1000) (Ralstonia solanacearum).